The sequence spans 122 residues: Large ribosomal subunit protein uL14 (122 aa).

Belongs to the universal ribosomal protein uL14 family. Part of the 50S ribosomal subunit. Forms a cluster with proteins L3 and L19. In the 70S ribosome, L14 and L19 interact and together make contacts with the 16S rRNA in bridges B5 and B8.

In terms of biological role, binds to 23S rRNA. Forms part of two intersubunit bridges in the 70S ribosome. The polypeptide is Large ribosomal subunit protein uL14 (Trichodesmium erythraeum (strain IMS101)).